Reading from the N-terminus, the 495-residue chain is Nuclear receptor subfamily 6 group A member 1 (495 aa).

Residues 1–34 (MERDERPPSGGGGGGGSAGFLEPPAALPPPPRNG) form a disordered region. Residues 9–18 (SGGGGGGGSA) are compositionally biased toward gly residues. The segment at residues 72 to 147 (QRTCLICGDR…MGMNRKAIRE (76 aa)) is a DNA-binding region (nuclear receptor). Positions 75, 78, 92, 95, 111, 117, 127, and 130 each coordinate Zn(2+). 2 NR C4-type zinc fingers span residues 75–95 (CLIC…CEGC) and 111–135 (CSRD…LLKC). 2 disordered regions span residues 145–165 (IRED…QISE) and 177–214 (FEEE…LSSS). Basic and acidic residues predominate over residues 180–192 (EANHWSNHGDSDH). Positions 187–268 (HGDSDHSSPG…RSLDPQSYSL (82 aa)) are sufficient for interaction with UIMC1. A compositionally biased stretch (low complexity) spans 202–214 (SNQPSPGSTLSSS). The region spanning 264–495 (QSYSLIHQLM…HSCKTSTVKE (232 aa)) is the NR LBD domain.

The protein belongs to the nuclear hormone receptor family. NR6 subfamily. In terms of assembly, homodimer. Interacts with UIMC1. Expressed in the germ cells of both the adult testis and ovary, being most abundant in spermatids.

It is found in the nucleus. Orphan nuclear receptor that binds to a response element containing the sequence 5'-TCAAGGTCA-3'. Acts as a regulator of embryonic stem cell pluripotency by mediating repression of POU5F1/OCT4: binds to the DR0 element within the POU5F1/OCT4 promoter and inhibits POU5F1/OCT4 expression during embryonic stem cell differentiation. Required to restrict POU5F1/OCT4 expression to the germ cell lineage. Involved in the regulation of gene expression in germ cell development during gametogenesis. In Mus musculus (Mouse), this protein is Nuclear receptor subfamily 6 group A member 1 (Nr6a1).